Here is an 818-residue protein sequence, read N- to C-terminus: Dipeptidyl aminopeptidase B (818 aa).

Topologically, residues 1-29 (MEGGEEEVERIPDELFDTKKKHLLDKLIR) are cytoplasmic. The chain crosses the membrane as a helical; Signal-anchor for type II membrane protein span at residues 30–45 (VGIILVLLIWGTVLLL). Residues 46-818 (KSIPHHSNTP…KRAFDGQFVK (773 aa)) are Lumenal-facing. 7 N-linked (GlcNAc...) asparagine glycosylation sites follow: asparagine 63, asparagine 79, asparagine 110, asparagine 139, asparagine 372, asparagine 392, and asparagine 421. The Charge relay system role is filled by serine 679. A glycan (N-linked (GlcNAc...) asparagine) is linked at asparagine 738. Active-site charge relay system residues include aspartate 756 and histidine 789.

Belongs to the peptidase S9B family.

The protein localises to the vacuole membrane. This is Dipeptidyl aminopeptidase B (DAP2) from Saccharomyces cerevisiae (strain ATCC 204508 / S288c) (Baker's yeast).